We begin with the raw amino-acid sequence, 1189 residues long: Origin recognition complex subunit 1 (1189 aa).

The tract at residues 1–53 is required for peripherial nuclear localization; the sequence is MTPKKKIFQNFQANDNEILSPTKKGIKLNVSKLNILNFENTIITKEKTNYEYK. The residue at position 2 (threonine 2) is a Phosphothreonine. The residue at position 20 (serine 20) is a Phosphoserine. Leucine heptad repeat repeat units lie at residues 137–143, 144–150, 151–157, and 158–164; these read LTNISSS and LSNSLDE. The span at 239 to 248 shows a compositional bias: basic residues; the sequence is KKNISKKNTH. Disordered stretches follow at residues 239-421 and 679-749; these read KKNI…DHTD and DTQA…QSSL. Residues 254–279 show a composition bias toward basic and acidic residues; the sequence is QNDKNKEKNKEKDKNIKKDRDKDIQT. Positions 304–320 are enriched in low complexity; that stretch reads NNDNVKNNLKNNINNNN. The span at 321-339 shows a compositional bias: polar residues; that stretch reads TLKRSSQSVRIDSDLSSAH. A compositionally biased stretch (low complexity) spans 353–381; the sequence is HRNNNNNNNNNNKTTSNNHNKNNKINNNN. Residues 385 to 394 show a composition bias toward basic and acidic residues; sequence NYKKQTDTKH. Residues 395 to 411 are compositionally biased toward low complexity; it reads TNNTQNNKYNKTKTTNT. Polar residues predominate over residues 695 to 709; that stretch reads KAQTTTNVKANTHTK. Basic and acidic residues-rich tracts occupy residues 710 to 724 and 733 to 742; these read TLNDHNKSKTTKNKE and DVKKKSDPHN. Residues valine 780 and 815–823 contribute to the ATP site; that span reads GMPGTGKTA. Residues aspartate 903 and glutamate 904 each coordinate Mg(2+). Glutamate 904 serves as a coordination point for ATP. A PIP-box motif is present at residues 913 to 922; the sequence is QKVLFTLFDW. Asparagine 937 and arginine 1003 together coordinate ATP.

This sequence belongs to the ORC1 family. As to quaternary structure, component of the origin recognition complex (ORC). Interacts (via PIP-box) with PCNA1; the interaction occurs during DNA replication in trophozoites. In schizonts, may be phosphorylated by PK5; phosphorylation leads to ORC1 dissociation from the telomeres and var gene promoters, translocation to the cytoplasm, where it is degraded by the proteasome.

Its subcellular location is the nucleus. It localises to the chromosome. The protein localises to the telomere. It is found in the nucleolus. The enzyme catalyses ATP + H2O = ADP + phosphate + H(+). Component of the origin recognition complex (ORC) that binds origins of replication and thus may regulate the initiation of DNA replication. DNA-binding may not be ATP-dependent. In a SIR2A/Sir2-dependent manner, binds to and silences telomers and subtelomeric repeat regions (TAREs). In a SIR2A/Sir2-dependent manner, binds to promoters of var genes localized next to TAREs resulting in their silencing. In Plasmodium falciparum (isolate 3D7), this protein is Origin recognition complex subunit 1.